Reading from the N-terminus, the 658-residue chain is Trimethylamine N-oxide transport system permease protein TmoV (658 aa).

Transmembrane regions (helical) follow at residues 20–40 (LGLA…AGLL), 103–123 (IGPI…YYLG), 127–147 (MALL…WDIA), 153–173 (VLVV…ISAW), 185–205 (VLAV…VIFF), 212–232 (GAVA…TLGL), 273–293 (VIML…PGLG), 300–320 (MGSF…LLAV), 349–369 (FLLM…VVPI), 420–440 (FMLS…ALLV), 447–467 (VLAA…RSVI), 469–489 (LYSV…IGVV), 517–537 (IPAI…ILIF), 585–605 (AVGF…AAFI), and 627–647 (FVLG…IMKW). The ABC transmembrane type-1 1 domain occupies 147-326 (AMQTMSVLVV…LLAVTLDRMS (180 aa)). Residues 465–644 (SVITLYSVLA…LMALTFDMVI (180 aa)) form the ABC transmembrane type-1 2 domain.

The protein belongs to the binding-protein-dependent transport system permease family. The complex is probably composed of two ATP-binding proteins (TmoW), two transmembrane proteins (TmoV) and a solute-binding protein (TmoX).

The protein localises to the cell inner membrane. In terms of biological role, part of the ABC transporter complex TmoXWV involved in trimethylamine N-oxide (TMAO) import. Responsible for the translocation of the substrate across the membrane. Is specific for TMAO and essential for TMAO metabolism. This chain is Trimethylamine N-oxide transport system permease protein TmoV, found in Ruegeria pomeroyi (strain ATCC 700808 / DSM 15171 / DSS-3) (Silicibacter pomeroyi).